Reading from the N-terminus, the 192-residue chain is SPbeta prophage-derived uncharacterized protein YokK (192 aa).

The chain is SPbeta prophage-derived uncharacterized protein YokK (yokK) from Bacillus subtilis (strain 168).